Reading from the N-terminus, the 360-residue chain is Glutamate 5-kinase (360 aa).

K7 contacts ATP. 3 residues coordinate substrate: S47, D134, and N146. ATP is bound by residues 166-167 and 208-214; these read TD and TGGIKTK. Positions 273-344 constitute a PUA domain; sequence VGEIHLDDGA…IGINSRSETT (72 aa).

The protein belongs to the glutamate 5-kinase family.

The protein localises to the cytoplasm. It catalyses the reaction L-glutamate + ATP = L-glutamyl 5-phosphate + ADP. The protein operates within amino-acid biosynthesis; L-proline biosynthesis; L-glutamate 5-semialdehyde from L-glutamate: step 1/2. In terms of biological role, catalyzes the transfer of a phosphate group to glutamate to form L-glutamate 5-phosphate. This is Glutamate 5-kinase from Prochlorococcus marinus (strain NATL2A).